A 337-amino-acid chain; its full sequence is MQIVEQMKDKALAELNLVKDKKTLDDIRVKYLGKKGELTEMMKLIATLPNDEKPKLGQAVNIAKQALQEAINLKLANFEEQELNEKLAQEKIDITLSGVGQNQGSLHPVTKTLNRIEAFFKQNGFAIEFGPEIESDYYNFETLNIPSHHPARAMHDTFYIDETHVLRTHTSGVQIRTMEKQQPPIRIIAPGRVYRCDSDITHTPMFHQVEGLLVDKDVSFADLKGLLHVFLNSFFEKDLKVRFRPSYFPFTEPSAEADIECVMCDGKGCRVCKHTGWLEVLGCGMVHPKVLKAGNIDSEKYQGFAFGMGVERLSMLRYGIDDLRMFFENDLRFLKQF.

Glu252 serves as a coordination point for Mg(2+).

Belongs to the class-II aminoacyl-tRNA synthetase family. Phe-tRNA synthetase alpha subunit type 1 subfamily. Tetramer of two alpha and two beta subunits. Mg(2+) serves as cofactor.

The protein localises to the cytoplasm. The catalysed reaction is tRNA(Phe) + L-phenylalanine + ATP = L-phenylalanyl-tRNA(Phe) + AMP + diphosphate + H(+). The protein is Phenylalanine--tRNA ligase alpha subunit of Francisella tularensis subsp. holarctica (strain OSU18).